The following is a 176-amino-acid chain: RNA pyrophosphohydrolase (176 aa).

In terms of domain architecture, Nudix hydrolase spans Gly-6–Lys-149. The Nudix box motif lies at Gly-38–Gly-59.

It belongs to the Nudix hydrolase family. RppH subfamily. It depends on a divalent metal cation as a cofactor.

Accelerates the degradation of transcripts by removing pyrophosphate from the 5'-end of triphosphorylated RNA, leading to a more labile monophosphorylated state that can stimulate subsequent ribonuclease cleavage. The chain is RNA pyrophosphohydrolase from Klebsiella pneumoniae (strain 342).